A 460-amino-acid chain; its full sequence is Piperamide synthase (460 aa).

A disordered region spans residues 1 to 23 (MASSQLEFNVERKQPELLGPAEP). Active-site proton acceptor residues include histidine 168 and aspartate 383. The Microbody targeting signal motif lies at 458 to 460 (SRM).

Belongs to the plant acyltransferase family. As to quaternary structure, monomer. As to expression, confined to immature fruits perisperm. Also detectable in roots.

The protein resides in the cytoplasm. It catalyses the reaction piperidine + (E,E)-piperoyl-CoA = piperine + CoA + H(+). It functions in the pathway aromatic compound metabolism. Involved in the biosynthesis of aromatic piperamides natural products such as piperine (1-piperoyl-piperidine), the pungent principle contributing, together with several terpenoids, to the aromatic properties of black pepper fruits, and displaying numerous pharmacological activities such as antiproliferative, antitumor, antiangiogenesis, antioxidant, antidiabetic, antiobesity, cardioprotective, antimicrobial, antiaging, and immunomodulatory effects. Can use piperidine and benzylamine as acceptors and various CoA-esters with aliphatic and aromatic amines as CoA-donors, including piperoyl-CoA, hexanoyl-CoA and octanoyl-CoA, and, to a lower extent, benzoyl-CoA. Mediates the conversion of piperidine to three piperine isomers in the presence of piperoyl-CoA. Its ability to convert in vitro piperidine to hexanoylpiperidine in the presence of hexanoyl-CoA, and to octanoylpiperidine in the presence of octanoyl-CoA is not confirmed in vivo according to fruits metabolome analysis. This is Piperamide synthase from Piper nigrum (Black pepper).